A 578-amino-acid chain; its full sequence is Ribonuclease SLFN12 (578 aa).

S368 is subject to Phosphoserine. A mediates interaction with PDE3A region spans residues 551 to 560; sequence AENLYQIIGI. S573 bears the Phosphoserine mark.

This sequence belongs to the Schlafen family. Subgroup II subfamily. As to quaternary structure, homodimer. Interacts with PDE3A; direct low affinity interaction which is stimulated by binding of 17beta-estradiol/E2 to PDE3A and that positively regulates the ribonuclease activity of SLFN12. Interacts with SERPINB12; as part of a pathway regulating cell differentiation. In terms of processing, phosphorylation at Ser-368 and Ser-573 negatively regulates the ribonuclease activity. Dephosphorylation is induced by the interaction with PDE3A and stimulates the rRNA ribonuclease activity.

The protein localises to the nucleus. The protein resides in the cytoplasm. It is found in the cytosol. Its function is as follows. Ribonuclease which is part of an E2/17beta-estradiol-induced pro-apoptotic signaling pathway. E2 stabilizes the PDE3A/SLFN12 complex in the cytosol, promoting the dephosphorylation of SLFN12 and activating its pro-apoptotic ribosomal RNA/rRNA ribonuclease activity. This apoptotic pathway might be relevant in tissues with high concentration of E2 and be for instance involved in placenta remodeling. May play a role in cell differentiation. This is Ribonuclease SLFN12 from Homo sapiens (Human).